The following is a 35-amino-acid chain: Cytochrome b6-f complex subunit 7 (35 aa).

Residues 9–27 (AGLSIVLTLVGVALGYGIL) form a helical membrane-spanning segment.

This sequence belongs to the PetM family. As to quaternary structure, the 4 large subunits of the cytochrome b6-f complex are cytochrome b6, subunit IV (17 kDa polypeptide, PetD), cytochrome f and the Rieske protein, while the 4 small subunits are PetG, PetL, PetM and PetN. The complex functions as a dimer.

The protein localises to the cellular thylakoid membrane. In terms of biological role, component of the cytochrome b6-f complex, which mediates electron transfer between photosystem II (PSII) and photosystem I (PSI), cyclic electron flow around PSI, and state transitions. In Synechococcus sp. (strain JA-3-3Ab) (Cyanobacteria bacterium Yellowstone A-Prime), this protein is Cytochrome b6-f complex subunit 7.